Reading from the N-terminus, the 563-residue chain is Methylcrotonoyl-CoA carboxylase beta chain, mitochondrial (563 aa).

A mitochondrion-targeting transit peptide spans 1 to 22 (MWAVLRLALRPCARASPAGPRA). The 258-residue stretch at 49-306 (MKALVNQLHE…QKKLDVTIEP (258 aa)) folds into the CoA carboxyltransferase N-terminal domain. Positions 49–555 (MKALVNQLHE…SAALNAPIEK (507 aa)) are carboxyltransferase. Lys70 is modified (N6-acetyllysine; alternate). An N6-succinyllysine; alternate modification is found at Lys70. Lys141 carries the post-translational modification N6-succinyllysine. The 247-residue stretch at 309–555 (EPLFPADELY…SAALNAPIEK (247 aa)) folds into the CoA carboxyltransferase C-terminal domain. Residues 343-372 (RFTEFKAFYGDTLVTGFARIFGYPVGIVGN) form an acyl-CoA binding region. An N6-acetyllysine; alternate modification is found at Lys495. The residue at position 495 (Lys495) is an N6-succinyllysine; alternate. Lys511 is subject to N6-acetyllysine.

It belongs to the AccD/PCCB family. In terms of assembly, probably a dodecamer composed of six biotin-containing alpha subunits (MCCC1) and six beta (MCCC2) subunits.

The protein resides in the mitochondrion matrix. The enzyme catalyses 3-methylbut-2-enoyl-CoA + hydrogencarbonate + ATP = 3-methyl-(2E)-glutaconyl-CoA + ADP + phosphate + H(+). It participates in amino-acid degradation; L-leucine degradation; (S)-3-hydroxy-3-methylglutaryl-CoA from 3-isovaleryl-CoA: step 2/3. Its function is as follows. Carboxyltransferase subunit of the 3-methylcrotonyl-CoA carboxylase, an enzyme that catalyzes the conversion of 3-methylcrotonyl-CoA to 3-methylglutaconyl-CoA, a critical step for leucine and isovaleric acid catabolism. This chain is Methylcrotonoyl-CoA carboxylase beta chain, mitochondrial (MCCC2), found in Homo sapiens (Human).